We begin with the raw amino-acid sequence, 104 residues long: MSDRKLSTREDADVLLEEELKEPRRFRVLLHNDDYTSMDFVVAVLIDIFRKSREQAMSIMLSVHEKGIGVCGVYTAEVAETKVAMVHARARAEGFPLRCSMEEV.

Belongs to the ClpS family. As to quaternary structure, binds to the N-terminal domain of the chaperone ClpA.

Involved in the modulation of the specificity of the ClpAP-mediated ATP-dependent protein degradation. In Oleidesulfovibrio alaskensis (strain ATCC BAA-1058 / DSM 17464 / G20) (Desulfovibrio alaskensis), this protein is ATP-dependent Clp protease adapter protein ClpS.